A 283-amino-acid chain; its full sequence is Acetylglutamate kinase (283 aa).

Substrate contacts are provided by residues 64 to 65 (GG), Arg-86, and Asn-181.

The protein belongs to the acetylglutamate kinase family. ArgB subfamily.

Its subcellular location is the cytoplasm. The catalysed reaction is N-acetyl-L-glutamate + ATP = N-acetyl-L-glutamyl 5-phosphate + ADP. Its pathway is amino-acid biosynthesis; L-arginine biosynthesis; N(2)-acetyl-L-ornithine from L-glutamate: step 2/4. Functionally, catalyzes the ATP-dependent phosphorylation of N-acetyl-L-glutamate. This is Acetylglutamate kinase from Sulfurovum sp. (strain NBC37-1).